The following is a 396-amino-acid chain: Probable sugar efflux transporter (396 aa).

12 consecutive transmembrane segments (helical) span residues 15–35, 50–70, 81–101, 103–123, 136–156, 169–189, 209–229, 246–266, 275–295, 301–321, 333–353, and 364–384; these read VVTL…PVGL, VGIM…PFML, LICL…AWNF, VLVI…SITA, AQAL…GLPI, TFFA…KLLP, PALM…YTAY, FATV…LVFG, LLVS…LPAA, LALL…GMQV, VAMA…ALAG, and TIGY…VLIF.

This sequence belongs to the major facilitator superfamily. SotB (TC 2.A.1.2) family.

Its subcellular location is the cell inner membrane. Its function is as follows. Involved in the efflux of sugars. The physiological role may be the reduction of the intracellular concentration of toxic sugars or sugar metabolites. This Salmonella arizonae (strain ATCC BAA-731 / CDC346-86 / RSK2980) protein is Probable sugar efflux transporter.